The primary structure comprises 350 residues: tRNA uridine(34) hydroxylase (350 aa).

The region spanning 146 to 240 (DDPDAVFIDM…YARRAREQGL (95 aa)) is the Rhodanese domain. Cys-200 (cysteine persulfide intermediate) is an active-site residue. A compositionally biased stretch (basic and acidic residues) spans 319-328 (RRRRAGRENG). Residues 319–350 (RRRRAGRENGNKIFNKSRGRLNSKLSIPDPAE) form a disordered region.

It belongs to the TrhO family.

It catalyses the reaction uridine(34) in tRNA + AH2 + O2 = 5-hydroxyuridine(34) in tRNA + A + H2O. Catalyzes oxygen-dependent 5-hydroxyuridine (ho5U) modification at position 34 in tRNAs. This chain is tRNA uridine(34) hydroxylase, found in Salmonella heidelberg (strain SL476).